A 253-amino-acid chain; its full sequence is CD151 antigen (253 aa).

Topologically, residues 1-18 (MGEFNEKKTTCGTVCLKY) are cytoplasmic. 2 S-palmitoyl cysteine lipidation sites follow: Cys-11 and Cys-15. The helical transmembrane segment at 19-39 (LLFTYNCCFWLAGLAVMAVGI) threads the bilayer. The Extracellular portion of the chain corresponds to 40–57 (WTLALKSDYISLLASGTY). A helical transmembrane segment spans residues 58–78 (LATAYILVVAGAVVMVTGVLG). The Cytoplasmic portion of the chain corresponds to 79-91 (CCATFKERRNLLR). The chain crosses the membrane as a helical span at residues 92–112 (LYFILLLIIFLLEIIAGVLAY). Over 113-221 (VYYQQLNTEL…LETFIQEHLR (109 aa)) the chain is Extracellular. A glycan (N-linked (GlcNAc...) asparagine) is linked at Asn-159. Residues 222-242 (VIGAVGTGIACVQVFGMIFTC) form a helical membrane-spanning segment. S-palmitoyl cysteine attachment occurs at residues Cys-242 and Cys-243. The Cytoplasmic segment spans residues 243-253 (CLYRSLKLEHY).

This sequence belongs to the tetraspanin (TM4SF) family. As to quaternary structure, interacts with integrins ITGA3:ITGB1, ITGA5:ITGB1, ITGA3:ITGB1 and ITGA6:ITGB4 and with CD9 and CD181. Interacts (via the second extracellular domain) with integrin ITGAV:ITGB3. Interacts with ITGA3; this interaction modulates ITGA3 glycosylation pattern. Interacts with F11R. Interacts with RAC1 and CDC42; these interactions mediate physical association of RAC1 and CDC42 with integrin adhesion receptor complexes. In terms of processing, palmitoylated. Palmitoylation by ZDHHC2 regulates CD151 expression, association with other tetraspanin family proteins and function in cell adhesion. Ubiquitinated by RNF128 on lysine residues present in the tetraspanin amino terminus via 'Lys-48'-linked ubiquitin leading to proteasomal degradation.

It localises to the cell membrane. In terms of biological role, structural component of specialized membrane microdomains known as tetraspanin-enriched microdomains (TERMs), which act as platforms for receptor clustering and signaling. Plays a role in various cellular and molecular mechanism through its association with both integrin and non-integrin proteins. These interactions facilitate critical cellular functions, including cell-to-cell communication, wound healing, platelet aggregation, trafficking, cell motility, and angiogenesis. Via interaction with JAM-A/F11R and integrin ITGA3:ITGB1, promotes the recruitment of signaling molecules such as RAC1, CDC42 and RhoGTPases to facilitate the polarization of epithelial cells and the reorganization of the actin cytoskeleton, which are critical steps in cell migration process. Regulates the glycosylation pattern of ITGA3:ITGB1 thereby modulating its activity. Plays an essential role in the maintenance of central laminin-binding integrin ITGA6:ITGB4-containing adhesion complexes. Essential for the proper assembly of the glomerular and tubular basement membranes in kidney. Contributes to T-cell activation by modulating integrin signaling leading to activation of downstream targets PTK2 and MAPK1/MAPK3. In Chlorocebus aethiops (Green monkey), this protein is CD151 antigen (CD151).